Here is an 806-residue protein sequence, read N- to C-terminus: Xylosyltransferase sqv-6 (806 aa).

Topologically, residues 1–11 (MLFNGTTKYRD) are cytoplasmic. A helical; Signal-anchor for type II membrane protein membrane pass occupies residues 12 to 32 (YAIVISLFFLLNVYLLYNTAQ). The Lumenal segment spans residues 33–806 (HTQVGNSKHI…GYDEDTQTLI (774 aa)). Cysteines 57 and 85 form a disulfide. N-linked (GlcNAc...) asparagine glycosylation is found at Asn-89 and Asn-169. Disulfide bonds link Cys-101-Cys-445, Cys-464-Cys-478, and Cys-466-Cys-476. The WSC domain maps to 109-205 (IDQRIGCFLD…FNAVEIFRTG (97 aa)). UDP-alpha-D-xylose contacts are provided by residues Asp-264 and 293–295 (TIW). The N-linked (GlcNAc...) asparagine glycan is linked to Asn-325. A UDP-alpha-D-xylose-binding site is contributed by 398–399 (DW). UDP-alpha-D-xylose is bound by residues Ser-479 and 505–506 (RK). N-linked (GlcNAc...) asparagine glycosylation is found at Asn-614, Asn-655, and Asn-719. A disulfide bridge links Cys-772 with Cys-778.

This sequence belongs to the glycosyltransferase 14 family. XylT subfamily. Requires a divalent metal cation as cofactor.

It is found in the endoplasmic reticulum membrane. The protein localises to the golgi apparatus membrane. It catalyses the reaction UDP-alpha-D-xylose + L-seryl-[protein] = 3-O-(beta-D-xylosyl)-L-seryl-[protein] + UDP + H(+). The protein operates within glycan metabolism; chondroitin sulfate biosynthesis. Its pathway is glycan metabolism; heparan sulfate biosynthesis. Catalyzes the first step in biosynthesis of glycosaminoglycan. Transfers D-xylose from UDP-D-xylose to specific serine residues of the core protein. Required for vulval morphogenesis and zygotic cytokinesis, suggesting that glycosaminoglycans play a central role in vulval morphogenesis. This Caenorhabditis elegans protein is Xylosyltransferase sqv-6.